We begin with the raw amino-acid sequence, 344 residues long: DNA-directed RNA polymerase subunit alpha (344 aa).

An alpha N-terminal domain (alpha-NTD) region spans residues 1 to 238 (MKVIKTAPLI…KQLGVFGERP (238 aa)). The segment at 253 to 344 (DAKDLSAKIE…EKLEDKGGND (92 aa)) is alpha C-terminal domain (alpha-CTD).

It belongs to the RNA polymerase alpha chain family. In terms of assembly, homodimer. The RNAP catalytic core consists of 2 alpha, 1 beta, 1 beta' and 1 omega subunit. When a sigma factor is associated with the core the holoenzyme is formed, which can initiate transcription.

It carries out the reaction RNA(n) + a ribonucleoside 5'-triphosphate = RNA(n+1) + diphosphate. Its function is as follows. DNA-dependent RNA polymerase catalyzes the transcription of DNA into RNA using the four ribonucleoside triphosphates as substrates. In Helicobacter pylori (strain HPAG1), this protein is DNA-directed RNA polymerase subunit alpha.